The chain runs to 136 residues: Protein Tat (136 aa).

The interval 22–37 (CTNCYCKKCCFHCPVC) is cysteine-rich. The segment at 38–48 (FTKKALGISYG) is core. Basic residues predominate over residues 48 to 57 (GRKRRGRKSA). The interval 48–136 (GRKRRGRKSA…SGSSGSACKH (89 aa)) is disordered. The Nuclear localization signal, and RNA-binding (TAR) signature appears at 49–55 (RKRRGRK). Residues 58 to 73 (VHSTNNQDPVRQQSLP) show a composition bias toward polar residues. A compositionally biased stretch (low complexity) spans 104–120 (SSVSSGRTSGTSSSGYT). Residues 123-136 (FKTSSGSSGSACKH) show a composition bias toward polar residues.

The protein belongs to the lentiviruses Tat family. In terms of assembly, interacts with host CCNT1. Associates with the P-TEFb complex composed at least of Tat, P-TEFb (CDK9 and CCNT1), TAR RNA, RNA Pol II. Interacts with CCNT2; the resulting complex is unable to bind to TAR RNA.

Its subcellular location is the host nucleus. It is found in the host nucleolus. Functionally, transcriptional activator that increases RNA Pol II processivity, thereby increasing the level of full-length viral transcripts. Recognizes a hairpin structure at the 5'-LTR of the nascent viral mRNAs referred to as the transactivation responsive RNA element (TAR) and recruits the cyclin T1-CDK9 complex (P-TEFb complex) that will in turn hyperphosphorylate the RNA polymerase II to allow efficient elongation. The CDK9 component of P-TEFb and other Tat-activated kinases hyperphosphorylate the C-terminus of RNA Pol II that becomes stabilized and much more processive. In terms of biological role, extracellular circulating Tat can be endocytosed by surrounding uninfected cells via the binding to several surface receptors. Endosomal low pH allows Tat to cross the endosome membrane to enter the cytosol and eventually further translocate into the nucleus, thereby inducing severe cell dysfunctions ranging from cell activation to cell death. Through. In Simian immunodeficiency virus (isolate TAN1) (SIV-cpz), this protein is Protein Tat.